Reading from the N-terminus, the 354-residue chain is uncharacterized protein (354 aa).

This is an uncharacterized protein from Rickettsia prowazekii (strain Madrid E).